The chain runs to 248 residues: Transcription termination/antitermination protein NusG (248 aa).

One can recognise a KOW domain in the interval 197-227 (KGDQVRVIEGPFMNFTGTVEEVHPEKRKLTV).

Belongs to the NusG family. In terms of assembly, monomer. Homodimer.

Functionally, participates in transcription elongation, termination and antitermination. The protein is Transcription termination/antitermination protein NusG of Aquifex aeolicus (strain VF5).